A 1534-amino-acid polypeptide reads, in one-letter code: Dicer-like protein 2 (1534 aa).

The span at 1–10 shows a compositional bias: basic and acidic residues; sequence MDQDPRKDNP. Residues 1-36 form a disordered region; that stretch reads MDQDPRKDNPVEMDVDRDDSSQDPDDNESFKSALDE. Residues 11-27 show a composition bias toward acidic residues; the sequence is VEMDVDRDDSSQDPDDN. Residues 65–249 enclose the Helicase ATP-binding domain; it reads TPAALTARAY…IEKLEQVLDA (185 aa). Residue 78–85 coordinates ATP; that stretch reads MFEASLKQ. The DEAH box motif lies at 192–195; that stretch reads DEAH. The 172-residue stretch at 404–575 folds into the Helicase C-terminal domain; it reads KVQTLLKVLA…NAELELLDDP (172 aa). The Dicer dsRNA-binding fold domain maps to 597-700; it reads ARSHLNHFCA…LPTKVSDFLA (104 aa). RNase III domains lie at 959–1107 and 1153–1353; these read MSLV…MCGG and LEPL…VDSG. 3 residues coordinate Mg(2+): glutamate 1193, aspartate 1339, and glutamate 1342. Positions 1383-1483 constitute a DRBM domain; the sequence is HPNVELQILA…AEKGCLVIKA (101 aa). Over residues 1492 to 1504 the composition is skewed to basic and acidic residues; the sequence is KAAAKEDKGHNTE. The segment at 1492 to 1534 is disordered; sequence KAAAKEDKGHNTENGDANADNGQSGEKEEVPDCRDADGDTVMN. The segment covering 1505–1515 has biased composition (polar residues); that stretch reads NGDANADNGQS. Positions 1516 to 1528 are enriched in basic and acidic residues; that stretch reads GEKEEVPDCRDAD.

It belongs to the helicase family. Dicer subfamily. It depends on Mg(2+) as a cofactor. Mn(2+) is required as a cofactor.

Its function is as follows. Dicer-like endonuclease involved in cleaving double-stranded RNA in the RNA interference (RNAi) pathway. Produces 21 to 25 bp dsRNAs (siRNAs) which target the selective destruction of homologous RNAs leading to sequence-specific suppression of gene expression, called post-transcriptional gene silencing (PTGS). Part of a broad host defense response against viral infection and transposons. Controls the expression of the non-LTR retrotransposon Tad in the African strain, Adiomopoume. The chain is Dicer-like protein 2 (dcl-2) from Neurospora crassa (strain ATCC 24698 / 74-OR23-1A / CBS 708.71 / DSM 1257 / FGSC 987).